Here is a 139-residue protein sequence, read N- to C-terminus: Stress-related protein 1 (139 aa).

Over residues 1 to 12 (MTSESSTPTGST) the composition is skewed to polar residues. The disordered stretch occupies residues 1–86 (MTSESSTPTG…AERPGSATTP (86 aa)). 2 stretches are compositionally biased toward low complexity: residues 14–53 (ALPASITRSSSSTLSTRPSASTPASTGSLTPSTSTASLVV) and 60–74 (SPVVSTRATATTRPR). Position 60 is a phosphoserine (Ser-60).

Embryo.

Functionally, involved in drought, heat, cold, and/or salt tolerance. The protein is Stress-related protein 1 (SRP1) of Zea mays (Maize).